The following is a 463-amino-acid chain: Glutamate--tRNA ligase 2 (463 aa).

The 'HIGH' region motif lies at 11 to 21 (PSPTGYLHIGG). Positions 240–244 (KLSKR) match the 'KMSKS' region motif. Position 243 (lysine 243) interacts with ATP.

Belongs to the class-I aminoacyl-tRNA synthetase family. Glutamate--tRNA ligase type 1 subfamily. Monomer.

It localises to the cytoplasm. It catalyses the reaction tRNA(Glu) + L-glutamate + ATP = L-glutamyl-tRNA(Glu) + AMP + diphosphate. Catalyzes the attachment of glutamate to tRNA(Glu) in a two-step reaction: glutamate is first activated by ATP to form Glu-AMP and then transferred to the acceptor end of tRNA(Glu). In Campylobacter jejuni (strain RM1221), this protein is Glutamate--tRNA ligase 2.